Reading from the N-terminus, the 213-residue chain is N-(5'-phosphoribosyl)anthranilate isomerase (213 aa).

This sequence belongs to the TrpF family.

It carries out the reaction N-(5-phospho-beta-D-ribosyl)anthranilate = 1-(2-carboxyphenylamino)-1-deoxy-D-ribulose 5-phosphate. The protein operates within amino-acid biosynthesis; L-tryptophan biosynthesis; L-tryptophan from chorismate: step 3/5. This chain is N-(5'-phosphoribosyl)anthranilate isomerase, found in Hahella chejuensis (strain KCTC 2396).